A 100-amino-acid chain; its full sequence is Urease subunit gamma (100 aa).

It belongs to the urease gamma subunit family. In terms of assembly, heterotrimer of UreA (gamma), UreB (beta) and UreC (alpha) subunits. Three heterotrimers associate to form the active enzyme.

Its subcellular location is the cytoplasm. The enzyme catalyses urea + 2 H2O + H(+) = hydrogencarbonate + 2 NH4(+). It participates in nitrogen metabolism; urea degradation; CO(2) and NH(3) from urea (urease route): step 1/1. This is Urease subunit gamma from Corynebacterium glutamicum (strain R).